The following is a 456-amino-acid chain: MANLIATDNPIVVVGMGLTGLSVARYLANKGANFFLLDTRKDLPKSTWQQVAELQAKCPSMKVDNGSLDVELLTSAKQIVLSPGVPLATPEIQQAKAAGVEIIGDIDLFLAERKAPVVGITGSNGKSTVTTLVGLAAENAGMNVAVGGNIGVPVLDLLADADVELYVLELSSFQLESVKRAQLDVACVLNVSPDHMDRYPSLAHYCQAKQRIYFGAKKIVYNLEDTLTIPPVMAGVERYGFSSKKAVEENEKHVLLNNDTNALSLNGQDVFSVADIKIAGAHNLKNALAALAICDAANIPFAGLKQALQEFEGLPHRCQWVANKNGVTYINDSKATNIGSAQAAIEGLAGQFKNIVLIAGGDGKGADFSSLGKVINQYVSAVVLIGVDAPKIQAVVDPQVMCVKAQTLNAAVKQAALLAKSGDLVLLSPACASLDMFANYEARGHEFALTVAEVSA.

122-128 (GSNGKST) lines the ATP pocket.

This sequence belongs to the MurCDEF family.

The protein resides in the cytoplasm. The catalysed reaction is UDP-N-acetyl-alpha-D-muramoyl-L-alanine + D-glutamate + ATP = UDP-N-acetyl-alpha-D-muramoyl-L-alanyl-D-glutamate + ADP + phosphate + H(+). It participates in cell wall biogenesis; peptidoglycan biosynthesis. Cell wall formation. Catalyzes the addition of glutamate to the nucleotide precursor UDP-N-acetylmuramoyl-L-alanine (UMA). This Saccharophagus degradans (strain 2-40 / ATCC 43961 / DSM 17024) protein is UDP-N-acetylmuramoylalanine--D-glutamate ligase.